We begin with the raw amino-acid sequence, 127 residues long: Photosystem II extrinsic protein U (127 aa).

An N-terminal signal peptide occupies residues 1–31 (MSRLFRRLSTLLLCSLLVLGVWLTQPLSVQA).

This sequence belongs to the PsbU family. PSII is composed of 1 copy each of membrane proteins PsbA, PsbB, PsbC, PsbD, PsbE, PsbF, PsbH, PsbI, PsbJ, PsbK, PsbL, PsbM, PsbT, PsbX, PsbY, PsbZ, Psb30/Ycf12, peripheral proteins PsbO, CyanoQ (PsbQ), PsbU, PsbV and a large number of cofactors. It forms dimeric complexes.

It localises to the cellular thylakoid membrane. Its function is as follows. One of the extrinsic, lumenal subunits of photosystem II (PSII). PSII is a light-driven water plastoquinone oxidoreductase, using light energy to abstract electrons from H(2)O, generating a proton gradient subsequently used for ATP formation. The extrinsic proteins stabilize the structure of photosystem II oxygen-evolving complex (OEC), the ion environment of oxygen evolution and protect the OEC against heat-induced inactivation. The sequence is that of Photosystem II extrinsic protein U from Synechococcus sp. (strain RCC307).